Reading from the N-terminus, the 297-residue chain is 3-methyl-2-oxobutanoate hydroxymethyltransferase (297 aa).

A compositionally biased stretch (polar residues) spans 1–15; the sequence is MSEQISEQSEQNVYG. Residues 1–40 form a disordered region; it reads MSEQISEQSEQNVYGASSPVPAGESSPSAASAPRTKVRTH. Residues 16 to 33 are compositionally biased toward low complexity; sequence ASSPVPAGESSPSAASAP. The Mg(2+) site is built by Asp-78 and Asp-117. 3-methyl-2-oxobutanoate is bound by residues 78–79, Asp-117, and Lys-147; that span reads DS. Glu-149 contacts Mg(2+). The Proton acceptor role is filled by Glu-215.

It belongs to the PanB family. Homodecamer; pentamer of dimers. Requires Mg(2+) as cofactor.

The protein localises to the cytoplasm. The enzyme catalyses 3-methyl-2-oxobutanoate + (6R)-5,10-methylene-5,6,7,8-tetrahydrofolate + H2O = 2-dehydropantoate + (6S)-5,6,7,8-tetrahydrofolate. Its pathway is cofactor biosynthesis; (R)-pantothenate biosynthesis; (R)-pantoate from 3-methyl-2-oxobutanoate: step 1/2. In terms of biological role, catalyzes the reversible reaction in which hydroxymethyl group from 5,10-methylenetetrahydrofolate is transferred onto alpha-ketoisovalerate to form ketopantoate. The chain is 3-methyl-2-oxobutanoate hydroxymethyltransferase from Mycobacterium marinum (strain ATCC BAA-535 / M).